We begin with the raw amino-acid sequence, 340 residues long: Phenylalanine--tRNA ligase alpha subunit (340 aa).

Position 255 (E255) interacts with Mg(2+).

Belongs to the class-II aminoacyl-tRNA synthetase family. Phe-tRNA synthetase alpha subunit type 1 subfamily. As to quaternary structure, tetramer of two alpha and two beta subunits. It depends on Mg(2+) as a cofactor.

The protein resides in the cytoplasm. The enzyme catalyses tRNA(Phe) + L-phenylalanine + ATP = L-phenylalanyl-tRNA(Phe) + AMP + diphosphate + H(+). The protein is Phenylalanine--tRNA ligase alpha subunit of Exiguobacterium sibiricum (strain DSM 17290 / CCUG 55495 / CIP 109462 / JCM 13490 / 255-15).